The chain runs to 375 residues: Transcription factor E2F4 (375 aa).

A DNA-binding region spans residues 12 to 81 (SRHEKSLGLL…KNSIQWKGVG (70 aa)). Positions 39-61 (LKAAADTLAVRQKRRIYDITNVL) are leucine-zipper. Positions 44-81 (DTLAVRQKRRIYDITNVLEGIGLIEKKSKNSIQWKGVG) match the DEF box motif. The interval 82 to 177 (PGCNTREIAD…NTNGQKKFQI (96 aa)) is dimerization. Positions 197–300 (SSAPVVVPVP…PDPSTSFQPI (104 aa)) are disordered. Polar residues predominate over residues 220–270 (STPQRPALTPQNDIATSPAPTVPHSTISNAESQDCPTGQTFSMENTTSSRL). A compositionally biased stretch (low complexity) spans 280 to 296 (SSASLDNSNDSPDPSTS). Residues 299 to 375 (PIKSDLSDVL…CDLFDVPINL (77 aa)) are transactivation.

This sequence belongs to the E2F/DP family. As to quaternary structure, component of the drtf1/e2f transcription factor complex. Component of the EDM complex, at least composed of e2f4, e2f5, mcidas and tfdp1.

The protein localises to the nucleus. Transcription activator that binds DNA cooperatively with DP proteins through the E2 recognition site, 5'-TTTC[CG]CGC-3' found in the promoter region of a number of genes. Component of the EDM complex, a complex specifically required for multiciliate cell differentiation: the EDM complex binds and activate genes required for centriole biogenesis. Activates genes required for centriole assembly (plk4, cep152) and genes specifically required for motile cilia formation (foxj1). Also promotes the deuterosome pathway of centriole biogenesis by activating expression of deup1, but not its paralog cep63. This Xenopus laevis (African clawed frog) protein is Transcription factor E2F4.